The primary structure comprises 642 residues: Aryl hydrocarbon receptor nuclear translocator homolog (642 aa).

In terms of domain architecture, bHLH spans 13 to 66 (ASRENHCEIERRRRNKMTAYITELSDMVPTCSALARKPDKLTILRMAVAHMKAL). PAS domains are found at residues 85–156 (DQEL…ESQN) and 271–341 (TAAN…LKQK). The 44-residue stretch at 346–389 (SLLYRARAKNSEYVWLRTQAYAFLNPYTDEVEYIVCTNSSGKTM) folds into the PAC domain. Residues 450–612 (QAPTPQQQQQ…GPAGAGQPQG (163 aa)) form a disordered region. Polar residues-rich tracts occupy residues 463–482 (RPGSAQTTPVGYTYDTTHSP) and 528–554 (YQYQQTSPARSPSGPTYTQLSAGNGNR). Low complexity predominate over residues 555–564 (QQAQPGAYQA).

As to quaternary structure, efficient DNA binding requires dimerization with another bHLH protein. Heterodimer with ahr, trh or sim. At stage 11, expression is detected in tracheal pits. At later stages, strong expression is also detected in the CNS.

The protein localises to the nucleus. Heterodimers of tgo/trh are involved in the control of breathless expression. Plays a role in the cellular or tissue response to oxygen deprivation. The sequence is that of Aryl hydrocarbon receptor nuclear translocator homolog (tgo) from Drosophila melanogaster (Fruit fly).